A 202-amino-acid polypeptide reads, in one-letter code: Small ribosomal subunit protein uS3 (202 aa).

Residues Leu-18–Pro-87 enclose the KH type-2 domain.

This sequence belongs to the universal ribosomal protein uS3 family. In terms of assembly, part of the 30S ribosomal subunit.

In terms of biological role, binds the lower part of the 30S subunit head. This is Small ribosomal subunit protein uS3 from Thermofilum pendens (strain DSM 2475 / Hrk 5).